Consider the following 526-residue polypeptide: Aspartate ammonia-lyase (526 aa).

The interval 1–44 (MSKTSNKSSADSKNDAKAEDIVNGENQIATNESQSSDSAAVSER) is disordered. The span at 10 to 20 (ADSKNDAKAED) shows a compositional bias: basic and acidic residues. Over residues 24 to 39 (GENQIATNESQSSDSA) the composition is skewed to polar residues. 5 residues coordinate L-aspartate: threonine 155, serine 194, threonine 195, asparagine 196, and threonine 241. Residues 371 to 380 (GSSIMPAKVN) are SS loop. Serine 372 (proton acceptor) is an active-site residue. L-aspartate-binding residues include serine 373 and lysine 378.

This sequence belongs to the class-II fumarase/aspartase family. Aspartase subfamily. In terms of assembly, homotetramer.

It carries out the reaction L-aspartate = fumarate + NH4(+). Functionally, catalyzes the reversible conversion of L-aspartate to fumarate and ammonia. In Corynebacterium glutamicum (strain ATCC 13032 / DSM 20300 / JCM 1318 / BCRC 11384 / CCUG 27702 / LMG 3730 / NBRC 12168 / NCIMB 10025 / NRRL B-2784 / 534), this protein is Aspartate ammonia-lyase.